The sequence spans 408 residues: Multidrug resistance protein MdtG (408 aa).

Transmembrane regions (helical) follow at residues 16–36, 58–78, 92–112, 115–135, 146–166, 173–193, 224–244, 256–276, 290–310, 319–339, and 378–398; these read LIVAWLGCFLTGAAFSLVMPF, IVFSITFLFSAIASPFWGGLA, LGMGIVMVLMGLAQNIWQFLI, ALLGLLGGFVPNANALIATQV, TLSTGGVSGALLGPMAGGLLA, PVFFITASVLILCFFVTLFCI, LFVTTLIIQVATGSIAPILTL, VAFISGMIASVPGVAALLSAP, ILITALIFSVLLLIPMSYVQT, FLLGAADGALLPAVQTLLVYN, and AVFLVTAGVVLFNAVYSWNSL.

It belongs to the major facilitator superfamily. DHA1 family. MdtG (TC 2.A.1.2.20) subfamily.

The protein resides in the cell inner membrane. In terms of biological role, confers resistance to fosfomycin and deoxycholate. In Escherichia coli O127:H6 (strain E2348/69 / EPEC), this protein is Multidrug resistance protein MdtG.